A 102-amino-acid chain; its full sequence is Putative ubiquitin-like protein FUBI-like protein ENSP00000310146 (102 aa).

A Ubiquitin-like domain is found at 23 to 99 (LCPQVAYVRA…LEVVGRRLGV (77 aa)).

The protein is Putative ubiquitin-like protein FUBI-like protein ENSP00000310146 of Homo sapiens (Human).